Consider the following 144-residue polypeptide: Transcriptional regulator MraZ (144 aa).

2 SpoVT-AbrB domains span residues 4-47 (EYKN…TADK) and 77-120 (AQEI…DLKQ).

The protein belongs to the MraZ family. In terms of assembly, forms oligomers.

It localises to the cytoplasm. The protein resides in the nucleoid. This chain is Transcriptional regulator MraZ, found in Treponema denticola (strain ATCC 35405 / DSM 14222 / CIP 103919 / JCM 8153 / KCTC 15104).